A 71-amino-acid polypeptide reads, in one-letter code: General transcription factor IIH subunit 5 (71 aa).

T69 carries the phosphothreonine modification.

The protein belongs to the TFB5 family. Component of the 7-subunit TFIIH core complex composed of XPB/ERCC3, XPD/ERCC2, GTF2H1, GTF2H2, GTF2H3, GTF2H4 and GTF2H5, which is active in NER. The core complex associates with the 3-subunit CDK-activating kinase (CAK) module composed of CCNH/cyclin H, CDK7 and MNAT1 to form the 10-subunit holoenzyme (holo-TFIIH) active in transcription. Part of TBP-based Pol II pre-initiation complex (PIC), in which Pol II core assembles with general transcription factors and other specific initiation factors including GTF2E1, GTF2E2, GTF2F1, GTF2F2, TCEA1, ERCC2, ERCC3, GTF2H2, GTF2H3, GTF2H4, GTF2H5, GTF2A1, GTF2A2, GTF2B and TBP; this large multi-subunit PIC complex mediates DNA unwinding and targets Pol II core to the transcription start site where the first phosphodiester bond forms.

The protein resides in the nucleus. It is found in the cytoplasm. Its function is as follows. Component of the general transcription and DNA repair factor IIH (TFIIH) core complex, which is involved in general and transcription-coupled nucleotide excision repair (NER) of damaged DNA and, when complexed to CAK, in RNA transcription by RNA polymerase II. In NER, TFIIH acts by opening DNA around the lesion to allow the excision of the damaged oligonucleotide and its replacement by a new DNA fragment. In transcription, TFIIH has an essential role in transcription initiation. When the pre-initiation complex (PIC) has been established, TFIIH is required for promoter opening and promoter escape. Phosphorylation of the C-terminal tail (CTD) of the largest subunit of RNA polymerase II by the kinase module CAK controls the initiation of transcription. Necessary for the stability of the TFIIH complex and for the presence of normal levels of TFIIH in the cell. This Mus musculus (Mouse) protein is General transcription factor IIH subunit 5.